We begin with the raw amino-acid sequence, 82 residues long: Beta-defensin 113 (82 aa).

A signal peptide spans 1 to 16; the sequence is MKILCIFLTFFFTVSC. Cystine bridges form between cysteine 35–cysteine 61, cysteine 42–cysteine 56, and cysteine 46–cysteine 62.

This sequence belongs to the beta-defensin family.

The protein resides in the secreted. Has antibacterial activity. The polypeptide is Beta-defensin 113 (DEFB113) (Pan troglodytes (Chimpanzee)).